A 364-amino-acid polypeptide reads, in one-letter code: Histidinol-phosphate aminotransferase (364 aa).

N6-(pyridoxal phosphate)lysine is present on K220.

This sequence belongs to the class-II pyridoxal-phosphate-dependent aminotransferase family. Histidinol-phosphate aminotransferase subfamily. In terms of assembly, homodimer. The cofactor is pyridoxal 5'-phosphate.

It catalyses the reaction L-histidinol phosphate + 2-oxoglutarate = 3-(imidazol-4-yl)-2-oxopropyl phosphate + L-glutamate. It participates in amino-acid biosynthesis; L-histidine biosynthesis; L-histidine from 5-phospho-alpha-D-ribose 1-diphosphate: step 7/9. The sequence is that of Histidinol-phosphate aminotransferase from Stenotrophomonas maltophilia (strain R551-3).